The following is a 297-amino-acid chain: 4-hydroxy-tetrahydrodipicolinate synthase (297 aa).

Threonine 47 is a binding site for pyruvate. The Proton donor/acceptor role is filled by tyrosine 136. Catalysis depends on lysine 165, which acts as the Schiff-base intermediate with substrate. Threonine 206 serves as a coordination point for pyruvate.

It belongs to the DapA family. As to quaternary structure, homotetramer; dimer of dimers.

It localises to the cytoplasm. The enzyme catalyses L-aspartate 4-semialdehyde + pyruvate = (2S,4S)-4-hydroxy-2,3,4,5-tetrahydrodipicolinate + H2O + H(+). Its pathway is amino-acid biosynthesis; L-lysine biosynthesis via DAP pathway; (S)-tetrahydrodipicolinate from L-aspartate: step 3/4. Catalyzes the condensation of (S)-aspartate-beta-semialdehyde [(S)-ASA] and pyruvate to 4-hydroxy-tetrahydrodipicolinate (HTPA). The polypeptide is 4-hydroxy-tetrahydrodipicolinate synthase (Sulfurovum sp. (strain NBC37-1)).